Here is a 323-residue protein sequence, read N- to C-terminus: Elongation factor P--(R)-beta-lysine ligase (323 aa).

74 to 76 contributes to the substrate binding site; that stretch reads SPE. ATP is bound by residues 98–100 and Asn-107; that span reads RNE. A substrate-binding site is contributed by Tyr-116. 242–243 contributes to the ATP binding site; that stretch reads EL. Glu-249 provides a ligand contact to substrate. Gly-298 contributes to the ATP binding site.

The protein belongs to the class-II aminoacyl-tRNA synthetase family. EpmA subfamily. As to quaternary structure, homodimer.

The catalysed reaction is D-beta-lysine + L-lysyl-[protein] + ATP = N(6)-((3R)-3,6-diaminohexanoyl)-L-lysyl-[protein] + AMP + diphosphate + H(+). In terms of biological role, with EpmB is involved in the beta-lysylation step of the post-translational modification of translation elongation factor P (EF-P). Catalyzes the ATP-dependent activation of (R)-beta-lysine produced by EpmB, forming a lysyl-adenylate, from which the beta-lysyl moiety is then transferred to the epsilon-amino group of a conserved specific lysine residue in EF-P. This chain is Elongation factor P--(R)-beta-lysine ligase, found in Photobacterium profundum (strain SS9).